The following is a 163-amino-acid chain: ECF RNA polymerase sigma factor SigM (163 aa).

Residues D30 to I43 carry the Polymerase core binding motif. Positions Y127–F146 form a DNA-binding region, H-T-H motif.

The protein belongs to the sigma-70 factor family. ECF subfamily. As to quaternary structure, interacts with the N-terminus of YhdL, which is probably its anti-sigma factor. Interacts transiently with the RNAP core.

Its function is as follows. Sigma factors are initiation factors that promote the attachment of RNA polymerase (RNAP) to specific initiation sites and are then released. Extracytoplasmic function (ECF) sigma factors are held in an inactive form by a cognate anti-sigma factor (YhdL) until released. This sigma factor is involved in the maintenance of membrane and cell wall integrity in response to environmental stresses including salt, acid, ethanol and antibiotics stress. Partially regulates transcription from a number of genes including disA. Associates with RNAP core under all growth phases. The chain is ECF RNA polymerase sigma factor SigM (sigM) from Bacillus subtilis (strain 168).